The following is a 401-amino-acid chain: NADH-quinone oxidoreductase subunit D (401 aa).

This sequence belongs to the complex I 49 kDa subunit family. As to quaternary structure, NDH-1 is composed of 15 different subunits. Subunits NuoB, C, D, E, F, and G constitute the peripheral sector of the complex.

The protein resides in the cell membrane. It carries out the reaction a quinone + NADH + 5 H(+)(in) = a quinol + NAD(+) + 4 H(+)(out). NDH-1 shuttles electrons from NADH, via FMN and iron-sulfur (Fe-S) centers, to quinones in the respiratory chain. The immediate electron acceptor for the enzyme in this species is believed to be a menaquinone. Couples the redox reaction to proton translocation (for every two electrons transferred, four hydrogen ions are translocated across the cytoplasmic membrane), and thus conserves the redox energy in a proton gradient. This chain is NADH-quinone oxidoreductase subunit D, found in Deinococcus radiodurans (strain ATCC 13939 / DSM 20539 / JCM 16871 / CCUG 27074 / LMG 4051 / NBRC 15346 / NCIMB 9279 / VKM B-1422 / R1).